Consider the following 172-residue polypeptide: 3-phenylpropionate/cinnamic acid dioxygenase subunit beta (172 aa).

This sequence belongs to the bacterial ring-hydroxylating dioxygenase beta subunit family. This dioxygenase system consists of four proteins: the two subunits of the hydroxylase component (HcaE and HcaF), a ferredoxin (HcaC) and a ferredoxin reductase (HcaD).

The catalysed reaction is 3-phenylpropanoate + NADH + O2 + H(+) = 3-(cis-5,6-dihydroxycyclohexa-1,3-dien-1-yl)propanoate + NAD(+). It catalyses the reaction (E)-cinnamate + NADH + O2 + H(+) = (2E)-3-(cis-5,6-dihydroxycyclohexa-1,3-dien-1-yl)prop-2-enoate + NAD(+). It functions in the pathway aromatic compound metabolism; 3-phenylpropanoate degradation. Its function is as follows. Part of the multicomponent 3-phenylpropionate dioxygenase. Converts 3-phenylpropionic acid (PP) and cinnamic acid (CI) into 3-phenylpropionate-dihydrodiol (PP-dihydrodiol) and cinnamic acid-dihydrodiol (CI-dihydrodiol), respectively. This is 3-phenylpropionate/cinnamic acid dioxygenase subunit beta from Escherichia coli O7:K1 (strain IAI39 / ExPEC).